A 290-amino-acid chain; its full sequence is MRFDEAYSGKVFIASRPEWEEADAILYGMPMDWTVSYRPGSRFGPSRIREVSIGLEEYSPYLDRDLADLNFFDAGDIPLPFGNPQRSLDMIEEYVDSILEKGKFPMGMGGEHLVSWPVIKAMYKKYPDLAIIHFDAHTDLRVDYEGEPLSHSTPIRKAAELIGPHNVYSFGIRSGMKEEFEWAKENGMHISKFEVLEPLKEVLPKLAGRPVYVTIDIDVLDPAHAPGTGTVDAGGITSKELLASVHEIARSEVNVKGADLVEVAPVYDHSEQTANTASKIIREMLLGFVK.

Positions 112, 135, 137, 139, 216, and 218 each coordinate Mn(2+).

Belongs to the arginase family. Agmatinase subfamily. Mn(2+) is required as a cofactor.

The catalysed reaction is agmatine + H2O = urea + putrescine. Its pathway is amine and polyamine biosynthesis; putrescine biosynthesis via agmatine pathway; putrescine from agmatine: step 1/1. In terms of biological role, catalyzes the formation of putrescine from agmatine. This Bacillus subtilis (strain 168) protein is Agmatinase (speB).